The primary structure comprises 249 residues: Metallo-beta-lactamase type 2 (249 aa).

An N-terminal signal peptide occupies residues 1–22 (MLKKIKISLILALGLTSLQAFG). Histidine 98, histidine 100, aspartate 102, histidine 161, and cysteine 180 together coordinate Zn(2+). Lysine 183 contributes to the substrate binding site. Residue histidine 222 participates in Zn(2+) binding.

The protein belongs to the metallo-beta-lactamase superfamily. Class-B beta-lactamase family. Monomer. Requires Zn(2+) as cofactor.

The protein resides in the periplasm. The enzyme catalyses a beta-lactam + H2O = a substituted beta-amino acid. Its function is as follows. Confers resistance to the different beta-lactams antibiotics (penicillin, cephalosporin and carbapenem) via the hydrolysis of the beta-lactam ring. This chain is Metallo-beta-lactamase type 2 (blaB3), found in Elizabethkingia meningoseptica (Chryseobacterium meningosepticum).